A 387-amino-acid polypeptide reads, in one-letter code: MDLEVVEFPLHHKLALPFRIGLLVIVGTWLWSVCYHLIYILNRYQPISPNPRGSLNSKWYHLLQIPLSNRHTDLEENTEFKANLVSPVDFHAGYCFAAILSISWATGFILFLKKTQGDIGGLYSHPIYPLLWVITAFILIVFPFPWRYRSSQRGLRKSIIRVFLFFQADFRSPYKDFIVSEIFTSYAKALGDFYIFGCVLQGHISKFTLRPDLKCDGTFFVPLAMAYPFIVAILQCLHYGLSRRKHTFKINLLSALKHATALPVIYLSAIIHAKQTKFTLTSGHGYLFWLWILSALLSSAYTFLWDVFIDWRIRFPFHKSINHKRFPMFIYAIGCFINFILRVTWSMKLHPRLHQFHEYEMGIFSFEMLEILRRFLWLFFHLDAISS.

8 consecutive transmembrane segments (helical) span residues 20-40 (IGLL…LIYI), 92-112 (AGYC…ILFL), 126-146 (PIYP…PFPW), 177-197 (FIVS…YIFG), 217-237 (GTFF…LQCL), 252-272 (LLSA…AIIH), 285-305 (GYLF…TFLW), and 326-346 (FPMF…VTWS). Residues 212 to 387 (DLKCDGTFFV…LFFHLDAISS (176 aa)) enclose the EXS domain.

This sequence belongs to the ERD1 family.

Its subcellular location is the membrane. This chain is Protein ERD1 homolog 2, found in Schizosaccharomyces pombe (strain 972 / ATCC 24843) (Fission yeast).